The sequence spans 297 residues: rRNA 2'-O-methyltransferase fibrillarin (297 aa).

Residues 1-56 form a disordered region; sequence MRGGFGRGGGGRGGSRGGRGGFGRGGGRGGGRGGGRGGGRGGGRGGGRGGGRGGAG. Residues arginine 2, arginine 7, arginine 12, arginine 16, arginine 19, arginine 24, arginine 28, arginine 32, arginine 36, arginine 40, arginine 44, arginine 48, and arginine 52 each carry the asymmetric dimethylarginine modification. S-adenosyl-L-methionine contacts are provided by residues 149–150, 168–169, 192–193, and 212–215; these read TT, EF, DA, and DVAQ.

This sequence belongs to the methyltransferase superfamily. Fibrillarin family. Component of box C/D small nucleolar ribonucleoprotein (snoRNP) particles. It is associated with the U3, U8 and U13 small nuclear RNAs. In terms of processing, by homology to other fibrillarins, some or all of the N-terminal domain arginines are modified to asymmetric dimethylarginine (DMA).

The protein localises to the nucleus. The protein resides in the nucleolus. It catalyses the reaction L-glutaminyl-[histone H2A] + S-adenosyl-L-methionine = N(5)-methyl-L-glutaminyl-[histone H2A] + S-adenosyl-L-homocysteine + H(+). Its function is as follows. S-adenosyl-L-methionine-dependent methyltransferase that has the ability to methylate both RNAs and proteins. Involved in pre-rRNA processing. Utilizes the methyl donor S-adenosyl-L-methionine to catalyze the site-specific 2'-hydroxyl methylation of ribose moieties in pre-ribosomal RNA. Site specificity is provided by a guide RNA that base pairs with the substrate. Methylation occurs at a characteristic distance from the sequence involved in base pairing with the guide RNA. Also acts as a protein methyltransferase by mediating methylation of 'Gln-105' of histone H2A (H2AQ105me), a modification that impairs binding of the FACT complex and is specifically present at 35S ribosomal DNA locus. This chain is rRNA 2'-O-methyltransferase fibrillarin, found in Leishmania major.